The following is a 498-amino-acid chain: Glutamate--tRNA ligase (498 aa).

The short motif at 11–21 (PSPTGHLHIGN) is the 'HIGH' region element. A 'KMSKS' region motif is present at residues 260 to 264 (KLSKR). Lysine 263 contributes to the ATP binding site.

Belongs to the class-I aminoacyl-tRNA synthetase family. Glutamate--tRNA ligase type 1 subfamily. In terms of assembly, monomer.

The protein resides in the cytoplasm. It carries out the reaction tRNA(Glu) + L-glutamate + ATP = L-glutamyl-tRNA(Glu) + AMP + diphosphate. Functionally, catalyzes the attachment of glutamate to tRNA(Glu) in a two-step reaction: glutamate is first activated by ATP to form Glu-AMP and then transferred to the acceptor end of tRNA(Glu). This is Glutamate--tRNA ligase from Leuconostoc citreum (strain KM20).